Reading from the N-terminus, the 204-residue chain is MELKNTIFLVILLSITILQSSSATPNRSESDQFIVSSCQTTQYPSLCVHTLSAYATKIRHNNDQDLAQTALIISLARAKSVTIFVAKLTKETPKFKRREYLAIKDCIEVLGNSVDRLAQSVKELARAGHAVASEDFMWKMSNVQTWVSAALTDETTCLDGFSERAMGGKVKRLIRYKVVHVAQVTSNALALVNQFAEKRSVKFP.

The signal sequence occupies residues 1–23; that stretch reads MELKNTIFLVILLSITILQSSSA. Asparagine 26 is a glycosylation site (N-linked (GlcNAc...) asparagine). Intrachain disulfides connect cysteine 38-cysteine 47 and cysteine 106-cysteine 157.

It belongs to the PMEI family. As to quaternary structure, binds reversibly to PME3 to inhibit its activity; the stability of the PME3-PMEI9 complex and the inhibition of the pectin methylesterase (PME) activity is pH-dependent, based on protonation status of amino-acids at the complex interface. As to expression, highly expressed in roots and etiolated hypocotyls. Expressed in seedlings, leaves, stems, siliques, floral buds and mature seeds.

The protein resides in the secreted. Its subcellular location is the extracellular space. It is found in the apoplast. Pectin methylesterase (PME) inhibitor that probably targets root-expressed PME and PME3 in a moderate pH-dependent manner, mainly in slightly acidic conditions (pH 6.3 and 5.0) and to some extent at pH 7.5; this processus relies on changes in the protonation of amino acids involved in intermolecular and intramolecular interactions. Regulates de-methylesterification of pectins in roots and affects root growth. This is Pectinesterase inhibitor 9 from Arabidopsis thaliana (Mouse-ear cress).